Reading from the N-terminus, the 119-residue chain is Small ribosomal subunit protein uS10 (119 aa).

Belongs to the universal ribosomal protein uS10 family. In terms of assembly, component of the 40S small ribosomal subunit.

Its subcellular location is the cytoplasm. Its function is as follows. Component of the small ribosomal subunit. The ribosome is a large ribonucleoprotein complex responsible for the synthesis of proteins in the cell. This Xenopus laevis (African clawed frog) protein is Small ribosomal subunit protein uS10 (rps20).